A 449-amino-acid chain; its full sequence is MMKTLLLFVGLLLTWESGQVLGDQTVSDNELQEMSNQGSKYVNKEIQNAVNGVKQIKTLIEKTNEERKTLLSNLEEAKKKKEDALNETRESETKLKELPGVCNETMMALWEECKPCLKQTCMKFYARVCRSGSGLVGRQLEEFLNQSSPFYFWMNGDRIDSLLENDRQQTHMLDVMQDHFSRASSIIDELFQDRFFTREPQDTYHYLPFSLPHRRPHFFFPKSRIVRSLMPFSPYEPLNFHAMFQPFLEMIHEAQQAMDIHFHSPAFQHPPTEFIREGDDDRTVCREIRHNSTGCLRMKDQCDKCREILSVDCSTNNPSQAKLRRELDESLQVAERLTRKYNELLKSYQWKMLNTSSLLEQLNEQFNWVSRLANLTQGEDQYYLRVTTVASHTSDSDVPSGVTEVVVKLFDSDPITVTVPVEVSRKNPKFMETVAEKALQEYRKKHREE.

An N-terminal signal peptide occupies residues 1 to 22 (MMKTLLLFVGLLLTWESGQVLG). Residues 78–81 (KKKK) carry the Nuclear localization signal motif. A glycan (N-linked (GlcNAc...) (complex) asparagine) is linked at asparagine 86. Intrachain disulfides connect cysteine 102/cysteine 313, cysteine 113/cysteine 305, cysteine 116/cysteine 302, cysteine 121/cysteine 295, and cysteine 129/cysteine 285. A glycan (N-linked (GlcNAc...) asparagine) is linked at asparagine 103. Serine 133 carries the post-translational modification Phosphoserine. N-linked (GlcNAc...) asparagine glycans are attached at residues asparagine 145, asparagine 291, and asparagine 354. N-linked (GlcNAc...) (complex) asparagine glycosylation occurs at asparagine 374. Serine 396 carries the post-translational modification Phosphoserine. The short motif at 443 to 447 (RKKHR) is the Nuclear localization signal element.

Belongs to the clusterin family. As to quaternary structure, antiparallel disulfide-linked heterodimer of an alpha chain and a beta chain. Self-associates and forms higher oligomers. Interacts with a broad range of misfolded proteins, including APP, APOC2 and LYZ. Slightly acidic pH promotes interaction with misfolded proteins. Forms high-molecular weight oligomers upon interaction with misfolded proteins. Interacts with APOA1, LRP2, CLUAP1 and PON1. Interacts with the complement membrane attack complex. Interacts (via alpha chain) with XRCC6. Interacts with SYVN1, COMMD1, BTRC, CUL1 and with ubiquitin and SCF (SKP1-CUL1-F-box protein) E3 ubiquitin-protein ligase complexes. Interacts (via alpha chain) with BAX in stressed cells, where BAX undergoes a conformation change leading to association with the mitochondrial membrane. Does not interact with BAX in unstressed cells. Found in a complex with LTF, CLU, EPPIN and SEMG1. Interacts (immaturely glycosylated pre-secreted form) with HSPA5; this interaction promotes CLU stability and facilitates stress-induced CLU retrotranslocation from the secretory pathway to the mitochondria, thereby reducing stress-induced apoptosis by stabilizing mitochondrial membrane integrity. Interacts (isoform 4) with BCL2L1; this interaction releases and activates BAX and promotes cell death. Interacts with TGFBR2 and ACVR1. Interacts (secreted form) with STMN3; this interaction may act as an important modulator during neuronal differentiation. Interacts with VLDLR and LRP8. In terms of processing, proteolytically cleaved on its way through the secretory system, probably within the Golgi lumen. Proteolytic cleavage is not necessary for its chaperone activity. All non-secreted forms are not proteolytically cleaved. Chaperone activity of uncleaved forms is dependent on a non-reducing environment. Polyubiquitinated, leading to proteasomal degradation. Under cellular stress, the intracellular level of cleaved form is reduced due to proteasomal degradation. Post-translationally, extensively glycosylated with sulfated N-linked carbohydrates. About 30% of the protein mass is comprised of complex N-linked carbohydrate. Endoplasmic reticulum (ER) stress induces changes in glycosylation status and increases level of hypoglycosylated forms. Core carbohydrates are essential for chaperone activity. Non-secreted forms are hypoglycosylated or unglycosylated. As to expression, detected in blood plasma, cerebrospinal fluid, milk, seminal plasma and colon mucosa. Detected in the germinal center of colon lymphoid nodules and in colon parasympathetic ganglia of the Auerbach plexus (at protein level). Ubiquitous. Detected in brain, testis, ovary, liver and pancreas, and at lower levels in kidney, heart, spleen and lung.

Its subcellular location is the secreted. The protein localises to the cytoplasm. It is found in the nucleus. It localises to the mitochondrion membrane. The protein resides in the cytosol. Its subcellular location is the microsome. The protein localises to the endoplasmic reticulum. It is found in the mitochondrion. It localises to the perinuclear region. The protein resides in the cytoplasmic vesicle. Its subcellular location is the secretory vesicle. The protein localises to the chromaffin granule. In terms of biological role, functions as extracellular chaperone that prevents aggregation of non native proteins. Prevents stress-induced aggregation of blood plasma proteins. Inhibits formation of amyloid fibrils by APP, APOC2, B2M, CALCA, CSN3, SNCA and aggregation-prone LYZ variants (in vitro). Does not require ATP. Maintains partially unfolded proteins in a state appropriate for subsequent refolding by other chaperones, such as HSPA8/HSC70. Does not refold proteins by itself. Binding to cell surface receptors triggers internalization of the chaperone-client complex and subsequent lysosomal or proteasomal degradation. Protects cells against apoptosis and against cytolysis by complement: inhibits assembly of the complement membrane attack complex (MAC) by preventing polymerization of C9 pore component of the MAC complex. Intracellular forms interact with ubiquitin and SCF (SKP1-CUL1-F-box protein) E3 ubiquitin-protein ligase complexes and promote the ubiquitination and subsequent proteasomal degradation of target proteins. Promotes proteasomal degradation of COMMD1 and IKBKB. Modulates NF-kappa-B transcriptional activity. A mitochondrial form suppresses BAX-dependent release of cytochrome c into the cytoplasm and inhibit apoptosis. Plays a role in the regulation of cell proliferation. An intracellular form suppresses stress-induced apoptosis by stabilizing mitochondrial membrane integrity through interaction with HSPA5. Secreted form does not affect caspase or BAX-mediated intrinsic apoptosis and TNF-induced NF-kappa-B-activity. Secreted form act as an important modulator during neuronal differentiation through interaction with STMN3. Plays a role in the clearance of immune complexes that arise during cell injury. Its function is as follows. Does not affect caspase or BAX-mediated intrinsic apoptosis and TNF-induced NF-kappa-B-activity. Functionally, does not affect caspase or BAX-mediated intrinsic apoptosis and TNF-induced NF-kappa-B-activity. Promotes cell death through interaction with BCL2L1 that releases and activates BAX. The protein is Clusterin of Homo sapiens (Human).